The primary structure comprises 154 residues: 6,7-dimethyl-8-ribityllumazine synthase (154 aa).

5-amino-6-(D-ribitylamino)uracil contacts are provided by residues F22, 57–59 (AYE), and 81–83 (AVI). A (2S)-2-hydroxy-3-oxobutyl phosphate-binding site is contributed by 86 to 87 (GT). H89 serves as the catalytic Proton donor. F114 is a 5-amino-6-(D-ribitylamino)uracil binding site. R128 contributes to the (2S)-2-hydroxy-3-oxobutyl phosphate binding site.

Belongs to the DMRL synthase family. Forms an icosahedral capsid composed of 60 subunits, arranged as a dodecamer of pentamers.

It catalyses the reaction (2S)-2-hydroxy-3-oxobutyl phosphate + 5-amino-6-(D-ribitylamino)uracil = 6,7-dimethyl-8-(1-D-ribityl)lumazine + phosphate + 2 H2O + H(+). The protein operates within cofactor biosynthesis; riboflavin biosynthesis; riboflavin from 2-hydroxy-3-oxobutyl phosphate and 5-amino-6-(D-ribitylamino)uracil: step 1/2. Its function is as follows. Catalyzes the formation of 6,7-dimethyl-8-ribityllumazine by condensation of 5-amino-6-(D-ribitylamino)uracil with 3,4-dihydroxy-2-butanone 4-phosphate. This is the penultimate step in the biosynthesis of riboflavin. The protein is 6,7-dimethyl-8-ribityllumazine synthase of Idiomarina loihiensis (strain ATCC BAA-735 / DSM 15497 / L2-TR).